Here is a 541-residue protein sequence, read N- to C-terminus: Putative transferase YhbX (541 aa).

The Periplasmic portion of the chain corresponds to 1–60 (MTVFNKFARTFKSHWLLYLCVIVFGITNLVASSGAHMVQRLLFFVLTILVVKRISSLPLR). Residues 61 to 81 (LLVAAPFVLLTAADMSISLYS) form a helical membrane-spanning segment. Residues 82-110 (WCTFGTTFNDGFAISVLQSDPDEVVKMLG) lie on the Cytoplasmic side of the membrane. A helical transmembrane segment spans residues 111 to 131 (MYIPYLCAFAFLSLLFLAVII). Residues 132–141 (KYDVSLPTKK) are Periplasmic-facing. A helical membrane pass occupies residues 142–162 (VTGILLLIVISGSLFSACQFA). Residues 163-264 (YKDAKNKKAF…RKQIKLFNQA (102 aa)) are Cytoplasmic-facing. Residues 265–285 (ISGAPYTALSVPLSLTADSVL) traverse the membrane as a helical segment. The Periplasmic portion of the chain corresponds to 286–541 (SHDIHNYPDN…QGNPTPEGQG (256 aa)).

It belongs to the phosphoethanolamine transferase family.

The protein resides in the cell inner membrane. Functionally, probably does not transfer phosphoethanolamine to lipid A. This Escherichia coli (strain K12) protein is Putative transferase YhbX (yhbX).